Consider the following 284-residue polypeptide: L-ribulose-5-phosphate 3-epimerase UlaE (284 aa).

The protein belongs to the L-ribulose-5-phosphate 3-epimerase family.

The catalysed reaction is L-ribulose 5-phosphate = L-xylulose 5-phosphate. It functions in the pathway cofactor degradation; L-ascorbate degradation; D-xylulose 5-phosphate from L-ascorbate: step 3/4. Functionally, catalyzes the isomerization of L-xylulose-5-phosphate to L-ribulose-5-phosphate. Is involved in the anaerobic L-ascorbate utilization. This chain is L-ribulose-5-phosphate 3-epimerase UlaE, found in Escherichia coli (strain K12 / MC4100 / BW2952).